The chain runs to 152 residues: MAFVKLLVSIAITTAITIAVITTITNNTTTIREYTSFDAPSTPTIRPNRLLAQKEVGERNPNAADHCNRNPEICTPYGGGGSNSTMTCCNNKCIDVSSDDNNCGACKNKCKFSQTCCRGQCVYVAYDKRHCGQCNHPCELGEFCVYGLCNYA.

A signal peptide spans 1–19 (MAFVKLLVSIAITTAITIA).

The protein belongs to the STIG1 family.

This Arabidopsis thaliana (Mouse-ear cress) protein is Stigma-specific STIG1-like protein 1.